The chain runs to 382 residues: Flap endonuclease 1 (382 aa).

The interval 1 to 105 (MGIKGLNAII…HELTKRSSRR (105 aa)) is N-domain. D34 is a binding site for Mg(2+). DNA-binding residues include R47 and R71. Residues D87, E156, E158, D177, and D179 each coordinate Mg(2+). The interval 120-251 (EKMKQERRLV…VTALKLIKTH (132 aa)) is I-domain. A DNA-binding site is contributed by E156. Positions 229 and 231 each coordinate DNA. D231 contributes to the Mg(2+) binding site. The segment at 339–347 (IQGRLDGFF) is interaction with PCNA. The tract at residues 358–382 (AAAAKRAQENKKLNKNKNKVTKGRR) is disordered. Positions 370 to 382 (LNKNKNKVTKGRR) are enriched in basic residues.

The protein belongs to the XPG/RAD2 endonuclease family. FEN1 subfamily. In terms of assembly, interacts with PCNA. Three molecules of RAD27 bind to one PCNA trimer with each molecule binding to one PCNA monomer. PCNA stimulates the nuclease activity without altering cleavage specificity. Requires Mg(2+) as cofactor. Phosphorylated. Phosphorylation upon DNA damage induces relocalization to the nuclear plasma.

It is found in the nucleus. The protein localises to the nucleolus. It localises to the nucleoplasm. Its subcellular location is the mitochondrion. Its function is as follows. Structure-specific nuclease with 5'-flap endonuclease and 5'-3' exonuclease activities involved in DNA replication and repair. During DNA replication, cleaves the 5'-overhanging flap structure that is generated by displacement synthesis when DNA polymerase encounters the 5'-end of a downstream Okazaki fragment. It enters the flap from the 5'-end and then tracks to cleave the flap base, leaving a nick for ligation. Also involved in the long patch base excision repair (LP-BER) pathway, by cleaving within the apurinic/apyrimidinic (AP) site-terminated flap. Acts as a genome stabilization factor that prevents flaps from equilibrating into structures that lead to duplications and deletions. Also possesses 5'-3' exonuclease activity on nicked or gapped double-stranded DNA, and exhibits RNase H activity. Also involved in replication and repair of rDNA and in repairing mitochondrial DNA. This chain is Flap endonuclease 1, found in Saccharomyces cerevisiae (strain YJM789) (Baker's yeast).